The following is a 225-amino-acid chain: UPF0758 protein Sputw3181_0338 (225 aa).

The MPN domain maps to 102–224; it reads VLTNPDLTRD…IVSFAERGWI (123 aa). Residues histidine 173, histidine 175, and aspartate 186 each contribute to the Zn(2+) site. A JAMM motif motif is present at residues 173–186; it reads HNHPSGIAEPSQAD.

The protein belongs to the UPF0758 family.

The sequence is that of UPF0758 protein Sputw3181_0338 from Shewanella sp. (strain W3-18-1).